The chain runs to 233 residues: Flagellar calcium-binding protein TB-17 (233 aa).

The segment covering 1–11 has biased composition (polar residues); it reads MGCSGSKNASN. The segment at 1–29 is disordered; it reads MGCSGSKNASNPKDGAASKGGKDGKTTAD. Residues 20–29 are compositionally biased toward basic and acidic residues; the sequence is GGKDGKTTAD. 3 consecutive EF-hand domains span residues 48–83, 130–165, and 167–202; these read ESKS…ILKL, YDIF…LKEW, and VDIT…KKLQ. The Ca(2+) site is built by Asp61, Asn63, Thr65, Lys67, Glu72, Asp143, Asp145, Ser147, Glu154, Asp180, Asn182, Ser184, and Glu191. Residues 203-233 are disordered; sequence VSGDPDDEENGANEGDGANAGDGVPAAEGSA. The span at 214–225 shows a compositional bias: low complexity; the sequence is ANEGDGANAGDG.

The protein belongs to the calflagin family.

Its subcellular location is the cell projection. It is found in the cilium. It localises to the flagellum. Its function is as follows. May contribute to the rapid motility of the trypanosomes, playing a role either in flagellar structure or in calcium metabolism. Could alternate between a GDP-bound inactive form to a calcium/GTP-bound active form. In Trypanosoma brucei brucei, this protein is Flagellar calcium-binding protein TB-17 (FCABP).